A 206-amino-acid chain; its full sequence is ATP phosphoribosyltransferase (206 aa).

Belongs to the ATP phosphoribosyltransferase family. Short subfamily. Heteromultimer composed of HisG and HisZ subunits.

The protein localises to the cytoplasm. It catalyses the reaction 1-(5-phospho-beta-D-ribosyl)-ATP + diphosphate = 5-phospho-alpha-D-ribose 1-diphosphate + ATP. The protein operates within amino-acid biosynthesis; L-histidine biosynthesis; L-histidine from 5-phospho-alpha-D-ribose 1-diphosphate: step 1/9. Catalyzes the condensation of ATP and 5-phosphoribose 1-diphosphate to form N'-(5'-phosphoribosyl)-ATP (PR-ATP). Has a crucial role in the pathway because the rate of histidine biosynthesis seems to be controlled primarily by regulation of HisG enzymatic activity. The sequence is that of ATP phosphoribosyltransferase from Thermus thermophilus (strain ATCC 27634 / DSM 579 / HB8).